Consider the following 388-residue polypeptide: Norsolorinic acid reductase A (388 aa).

An NADP(+)-binding site is contributed by Asp-69. Catalysis depends on Tyr-74, which acts as the Proton donor. His-148 provides a ligand contact to substrate. NADP(+) is bound by residues 178–179, Gln-204, 233–243, and 300–308; these read SD, GVLGRGQFRSA, and RKVEHLKEN.

Belongs to the aldo/keto reductase family. Aldo/keto reductase 2 subfamily.

Its pathway is mycotoxin biosynthesis; aflatoxin biosynthesis. Functionally, norsolorinic acid reductase; part of the gene cluster that mediates the biosynthesis of aflatoxins, a group of polyketide-derived furanocoumarins, and part of the most toxic and carcinogenic compounds among the known mycotoxins. The four major aflatoxins produced by A.parasiticus are aflatoxin B1 (AFB1), aflatoxin B2 (AFB2), aflatoxin G1 (AFG1) and aflatoxin G2 (AFG2). Within the aflatoxin pathway, the norsolorinic acid reductase aflE may play a role in the conversion of norsolorinic acid (NOR) to averantin (AVN). The biosynthesis of aflatoxins begins with the norsolorinic acid synthase aflC that combines a hexanoyl starter unit produced by the fatty acid synthase aflA/aflB and 7 malonyl-CoA extender units to synthesize the precursor NOR. The second step is the conversion of NOR to averantin and requires the norsolorinic acid ketoreductase aflD, which catalyzes the dehydration of norsolorinic acid to form (1'S)-averantin. The norsolorinic acid reductases aflE and aflF may also play a role in the conversion of NOR to AVN. The cytochrome P450 monooxygenase aflG then catalyzes the hydroxylation of AVN to 5'hydroxyaverantin (HAVN). The next step is performed by the 5'-hydroxyaverantin dehydrogenase aflH that transforms HAVN to 5'-oxoaverantin (OAVN) which is further converted to averufin (AVF) by aflK that plays a dual role in the pathway, as a 5'-oxoaverantin cyclase that mediates conversion of 5'-oxoaverantin, as well as a versicolorin B synthase in a later step in the pathway. The averufin oxidase aflI catalyzes the conversion of AVF to versiconal hemiacetal acetate (VHA). VHA is then the substrate for the versiconal hemiacetal acetate esterase aflJ to yield versiconal (VAL). Versicolorin B synthase aflK then converts VAL to versicolorin B (VERB) by closing the bisfuran ring of aflatoxin which is required for DNA-binding, thus giving to aflatoxin its activity as a mutagen. Then, the activity of the versicolorin B desaturase aflL leads to versicolorin A (VERA). A branch point starts from VERB since it can also be converted to dihydrodemethylsterigmatocystin (DMDHST), probably also by aflL, VERA being a precursor for aflatoxins B1 and G1, and DMDHST for aflatoxins B2 and G2. Next, the versicolorin reductase aflM and the cytochrome P450 monooxygenase aflN are involved in conversion of VERA to demethylsterigmatocystin (DMST). AflX and aflY seem also involved in this step, through probable aflX-mediated epoxide ring-opening step following versicolorin A oxidation and aflY-mediated Baeyer-Villiger oxidation required for the formation of the xanthone ring. The methyltransferase aflO then leads to the modification of DMST to sterigmatocystin (ST), and of DMDHST to dihydrosterigmatocystin (DHST). Both ST and DHST are then substrates of the O-methyltransferase aflP to yield O-methylsterigmatocystin (OMST) and dihydro-O-methylsterigmatocystin (DHOMST), respectively. Finally OMST is converted to aflatoxins B1 and G1, and DHOMST to aflatoxins B2 and G2, via the action of several enzymes including O-methylsterigmatocystin oxidoreductase aflQ, the cytochrome P450 monooxygenase aflU, but also the NADH-dependent flavin oxidoreductase nadA which is specifically required for the synthesis of AFG1. The polypeptide is Norsolorinic acid reductase A (Aspergillus parasiticus (strain ATCC 56775 / NRRL 5862 / SRRC 143 / SU-1)).